The following is a 312-amino-acid chain: Protoheme IX farnesyltransferase (312 aa).

The next 9 membrane-spanning stretches (helical) occupy residues 29–49, 50–70, 90–110, 117–137, 150–170, 177–197, 223–243, 248–268, and 292–312; these read VMSL…GHMN, PVLA…SGAL, IPAG…LSAF, LMVN…YAVV, IVIG…AATG, VVLF…LSLF, ALFY…LGFA, GAIS…MWVA, and LFAV…FGGF.

The protein belongs to the UbiA prenyltransferase family. Protoheme IX farnesyltransferase subfamily.

Its subcellular location is the cell inner membrane. It catalyses the reaction heme b + (2E,6E)-farnesyl diphosphate + H2O = Fe(II)-heme o + diphosphate. The protein operates within porphyrin-containing compound metabolism; heme O biosynthesis; heme O from protoheme: step 1/1. Converts heme B (protoheme IX) to heme O by substitution of the vinyl group on carbon 2 of heme B porphyrin ring with a hydroxyethyl farnesyl side group. The sequence is that of Protoheme IX farnesyltransferase from Brucella anthropi (strain ATCC 49188 / DSM 6882 / CCUG 24695 / JCM 21032 / LMG 3331 / NBRC 15819 / NCTC 12168 / Alc 37) (Ochrobactrum anthropi).